The primary structure comprises 492 residues: Bifunctional protein GlmU (492 aa).

Positions 1–238 (MRDAAVVILA…AALVAGVNDR (238 aa)) are pyrophosphorylase. UDP-N-acetyl-alpha-D-glucosamine is bound by residues 9 to 12 (LAAG), K23, Q80, and 85 to 86 (GT). Residue D111 coordinates Mg(2+). 4 residues coordinate UDP-N-acetyl-alpha-D-glucosamine: G148, E163, N178, and N236. A Mg(2+)-binding site is contributed by N236. The linker stretch occupies residues 239–259 (VQLADLAAVLNRRIVEGHQRA). The tract at residues 260-492 (GVTIIDPAST…EDQGPEATGE (233 aa)) is N-acetyltransferase. Residues R341 and K359 each contribute to the UDP-N-acetyl-alpha-D-glucosamine site. Catalysis depends on H371, which acts as the Proton acceptor. UDP-N-acetyl-alpha-D-glucosamine is bound by residues Y374 and N385. Acetyl-CoA contacts are provided by residues A388, 394-395 (NY), S413, and A431. The span at 469–483 (EAAAAAGAGAGAAAE) shows a compositional bias: low complexity. The interval 469–492 (EAAAAAGAGAGAAAEDQGPEATGE) is disordered.

It in the N-terminal section; belongs to the N-acetylglucosamine-1-phosphate uridyltransferase family. The protein in the C-terminal section; belongs to the transferase hexapeptide repeat family. In terms of assembly, homotrimer. It depends on Mg(2+) as a cofactor.

The protein localises to the cytoplasm. It carries out the reaction alpha-D-glucosamine 1-phosphate + acetyl-CoA = N-acetyl-alpha-D-glucosamine 1-phosphate + CoA + H(+). It catalyses the reaction N-acetyl-alpha-D-glucosamine 1-phosphate + UTP + H(+) = UDP-N-acetyl-alpha-D-glucosamine + diphosphate. It functions in the pathway nucleotide-sugar biosynthesis; UDP-N-acetyl-alpha-D-glucosamine biosynthesis; N-acetyl-alpha-D-glucosamine 1-phosphate from alpha-D-glucosamine 6-phosphate (route II): step 2/2. The protein operates within nucleotide-sugar biosynthesis; UDP-N-acetyl-alpha-D-glucosamine biosynthesis; UDP-N-acetyl-alpha-D-glucosamine from N-acetyl-alpha-D-glucosamine 1-phosphate: step 1/1. Its pathway is bacterial outer membrane biogenesis; LPS lipid A biosynthesis. In terms of biological role, catalyzes the last two sequential reactions in the de novo biosynthetic pathway for UDP-N-acetylglucosamine (UDP-GlcNAc). The C-terminal domain catalyzes the transfer of acetyl group from acetyl coenzyme A to glucosamine-1-phosphate (GlcN-1-P) to produce N-acetylglucosamine-1-phosphate (GlcNAc-1-P), which is converted into UDP-GlcNAc by the transfer of uridine 5-monophosphate (from uridine 5-triphosphate), a reaction catalyzed by the N-terminal domain. This Mycolicibacterium vanbaalenii (strain DSM 7251 / JCM 13017 / BCRC 16820 / KCTC 9966 / NRRL B-24157 / PYR-1) (Mycobacterium vanbaalenii) protein is Bifunctional protein GlmU.